The sequence spans 822 residues: AP-1 complex subunit gamma-1 (822 aa).

Positions 597–628 are disordered; that stretch reads EIVQTNGETEPAPLETKPPPSGPQPTSQANDL. Residues 702-817 form the GAE domain; sequence AGIPSITAYS…QDLAEVNNFP (116 aa).

It belongs to the adaptor complexes large subunit family. As to quaternary structure, adaptor protein complex 1 (AP-1) is a heterotetramer composed of two large adaptins (gamma-type subunit AP1G1 and beta-type subunit AP1B1), a medium adaptin (mu-type subunit AP1M1 or AP1M2) and a small adaptin (sigma-type subunit AP1S1 or AP1S2 or AP1S3). Interacts (via GAE domain) with RABEP1. Interacts with EPS15. Interacts with SYNRG/gamma-synergin. Interacts (via GAE domain) with AP1AR (via coiled-coil domain). Interacts with CLN3 (via dileucine motif); this interaction facilitates lysosomal targeting. Interacts (via GAE domain) with AFTPH/aftiphilin; the interaction is required to recruit AFTPH/aftiphilin to the perinuclear region of the cell.

Its subcellular location is the golgi apparatus. It is found in the cytoplasmic vesicle. The protein localises to the clathrin-coated vesicle membrane. It localises to the cytoplasm. The protein resides in the perinuclear region. Its subcellular location is the clathrin-coated vesicle. It is found in the membrane. The protein localises to the clathrin-coated pit. Functionally, subunit of clathrin-associated adaptor protein complex 1 that plays a role in protein sorting in the late-Golgi/trans-Golgi network (TGN) and/or endosomes. The AP complexes mediate both the recruitment of clathrin to membranes and the recognition of sorting signals within the cytosolic tails of transmembrane cargo molecules. In association with AFTPH/aftiphilin in the aftiphilin/p200/gamma-synergin complex, involved in the trafficking of transferrin from early to recycling endosomes, and the membrane trafficking of furin and the lysosomal enzyme cathepsin D between the trans-Golgi network (TGN) and endosomes. The chain is AP-1 complex subunit gamma-1 (AP1G1) from Pongo abelii (Sumatran orangutan).